The chain runs to 1371 residues: DNA-directed RNA polymerase subunit beta (1371 aa).

The protein belongs to the RNA polymerase beta chain family. As to quaternary structure, the RNAP catalytic core consists of 2 alpha, 1 beta, 1 beta' and 1 omega subunit. When a sigma factor is associated with the core the holoenzyme is formed, which can initiate transcription.

It carries out the reaction RNA(n) + a ribonucleoside 5'-triphosphate = RNA(n+1) + diphosphate. DNA-dependent RNA polymerase catalyzes the transcription of DNA into RNA using the four ribonucleoside triphosphates as substrates. This is DNA-directed RNA polymerase subunit beta from Geobacter sp. (strain M21).